A 393-amino-acid polypeptide reads, in one-letter code: Methylthioribose kinase (393 aa).

ATP is bound by residues asparagine 38, lysine 53, and 107-109 (EDL). Aspartate 225 contacts substrate. Position 242–244 (242–244 (DPE)) interacts with ATP. Residue arginine 332 participates in substrate binding.

This sequence belongs to the methylthioribose kinase family. As to quaternary structure, homodimer.

It carries out the reaction 5-(methylsulfanyl)-D-ribose + ATP = 5-(methylsulfanyl)-alpha-D-ribose 1-phosphate + ADP + H(+). It participates in amino-acid biosynthesis; L-methionine biosynthesis via salvage pathway; S-methyl-5-thio-alpha-D-ribose 1-phosphate from S-methyl-5'-thioadenosine (hydrolase route): step 2/2. Functionally, catalyzes the phosphorylation of methylthioribose into methylthioribose-1-phosphate. This Bacillus cereus (strain ZK / E33L) protein is Methylthioribose kinase.